Here is a 160-residue protein sequence, read N- to C-terminus: Transcription antitermination protein NusB (160 aa).

It belongs to the NusB family.

Its function is as follows. Involved in transcription antitermination. Required for transcription of ribosomal RNA (rRNA) genes. Binds specifically to the boxA antiterminator sequence of the ribosomal RNA (rrn) operons. This is Transcription antitermination protein NusB from Rhizobium meliloti (strain 1021) (Ensifer meliloti).